The following is a 492-amino-acid chain: RNase aCSPSF2 (492 aa).

A divalent metal cation contacts are provided by histidine 130, histidine 132, aspartate 134, histidine 135, histidine 213, aspartate 234, and histidine 460.

It belongs to the metallo-beta-lactamase superfamily. RNA-metabolizing metallo-beta-lactamase-like family. The cofactor is Mg(2+).

In terms of biological role, a 5'-3' exoribonuclease, more active on 5'-monophosphorylated and 5'-hydroxylated RNA than 5'-tri-phosphorylated RNA; note there is no evidence for accumulation of 5'-monophosphorylated RNA in this organism. Translation initiation factor 2 subunit gamma but not subunit alpha protects 5'-tri-phosphorylated RNA from degradation by this enzyme. In Saccharolobus solfataricus (strain ATCC 35092 / DSM 1617 / JCM 11322 / P2) (Sulfolobus solfataricus), this protein is RNase aCSPSF2.